A 242-amino-acid chain; its full sequence is UPF0246 protein SPN23F15130 (242 aa).

It belongs to the UPF0246 family.

The sequence is that of UPF0246 protein SPN23F15130 from Streptococcus pneumoniae (strain ATCC 700669 / Spain 23F-1).